Here is a 331-residue protein sequence, read N- to C-terminus: Probable protein phosphatase 2C 1 (331 aa).

The disordered stretch occupies residues 1 to 29 (MAASSTATRLSPPRLHAPTTPSPHLPLRR). A PPM-type phosphatase domain is found at 48–292 (THLIPHPRKA…DDITVIVAQV (245 aa)). Residues Asp-79, Gly-80, Asp-210, and Asp-283 each coordinate Mn(2+). A disordered region spans residues 300–331 (DEGVDEEKGQGDEQGSAVAVASSEQKEDSITT).

It belongs to the PP2C family. It depends on Mg(2+) as a cofactor. Mn(2+) serves as cofactor.

It carries out the reaction O-phospho-L-seryl-[protein] + H2O = L-seryl-[protein] + phosphate. The enzyme catalyses O-phospho-L-threonyl-[protein] + H2O = L-threonyl-[protein] + phosphate. This Oryza sativa subsp. japonica (Rice) protein is Probable protein phosphatase 2C 1.